A 321-amino-acid polypeptide reads, in one-letter code: Phosphatidate cytidylyltransferase, mitochondrial (321 aa).

It belongs to the TAM41 family. It depends on Mg(2+) as a cofactor. Co(2+) is required as a cofactor. Requires Cu(2+) as cofactor.

It is found in the mitochondrion inner membrane. It catalyses the reaction a 1,2-diacyl-sn-glycero-3-phosphate + CTP + H(+) = a CDP-1,2-diacyl-sn-glycerol + diphosphate. The protein operates within phospholipid metabolism; CDP-diacylglycerol biosynthesis; CDP-diacylglycerol from sn-glycerol 3-phosphate: step 3/3. Its function is as follows. Catalyzes the formation of CDP-diacylglycerol (CDP-DAG) from phosphatidic acid (PA) in the mitochondrial inner membrane. Required for the biosynthesis of the dimeric phospholipid cardiolipin, which stabilizes supercomplexes of the mitochondrial respiratory chain in the mitochondrial inner membrane. The polypeptide is Phosphatidate cytidylyltransferase, mitochondrial (Caenorhabditis briggsae).